The chain runs to 370 residues: Spermidine/putrescine import ATP-binding protein PotA 1 (370 aa).

One can recognise an ABC transporter domain in the interval 12-250; that stretch reads VSIRAVRKVY…PGNRFVADFI (239 aa). An ATP-binding site is contributed by 48-55; it reads GPSGCGKT.

It belongs to the ABC transporter superfamily. Spermidine/putrescine importer (TC 3.A.1.11.1) family. In terms of assembly, the complex is composed of two ATP-binding proteins (PotA), two transmembrane proteins (PotB and PotC) and a solute-binding protein (PotD).

It is found in the cell inner membrane. The enzyme catalyses ATP + H2O + polyamine-[polyamine-binding protein]Side 1 = ADP + phosphate + polyamineSide 2 + [polyamine-binding protein]Side 1.. Part of the ABC transporter complex PotABCD involved in spermidine/putrescine import. Responsible for energy coupling to the transport system. This Pseudomonas aeruginosa (strain ATCC 15692 / DSM 22644 / CIP 104116 / JCM 14847 / LMG 12228 / 1C / PRS 101 / PAO1) protein is Spermidine/putrescine import ATP-binding protein PotA 1.